The following is a 199-amino-acid chain: Translation initiation factor IF-3 (199 aa).

This sequence belongs to the IF-3 family. Monomer.

The protein resides in the cytoplasm. Functionally, IF-3 binds to the 30S ribosomal subunit and shifts the equilibrium between 70S ribosomes and their 50S and 30S subunits in favor of the free subunits, thus enhancing the availability of 30S subunits on which protein synthesis initiation begins. This chain is Translation initiation factor IF-3, found in Gloeobacter violaceus (strain ATCC 29082 / PCC 7421).